A 424-amino-acid chain; its full sequence is 3-isopropylmalate dehydratase large subunit 2 (424 aa).

[4Fe-4S] cluster-binding residues include Cys299, Cys359, and Cys362.

This sequence belongs to the aconitase/IPM isomerase family. LeuC type 2 subfamily. In terms of assembly, heterodimer of LeuC and LeuD. It depends on [4Fe-4S] cluster as a cofactor.

It carries out the reaction (2R,3S)-3-isopropylmalate = (2S)-2-isopropylmalate. It participates in amino-acid biosynthesis; L-leucine biosynthesis; L-leucine from 3-methyl-2-oxobutanoate: step 2/4. Catalyzes the isomerization between 2-isopropylmalate and 3-isopropylmalate, via the formation of 2-isopropylmaleate. The chain is 3-isopropylmalate dehydratase large subunit 2 from Rubrobacter xylanophilus (strain DSM 9941 / JCM 11954 / NBRC 16129 / PRD-1).